The sequence spans 122 residues: UPF0102 protein CE1920 (122 aa).

It belongs to the UPF0102 family.

This is UPF0102 protein CE1920 from Corynebacterium efficiens (strain DSM 44549 / YS-314 / AJ 12310 / JCM 11189 / NBRC 100395).